The sequence spans 352 residues: Adenosine deaminase (352 aa).

The residue at position 2 (A2) is an N-acetylalanine. 2 residues coordinate Zn(2+): H15 and H17. Substrate is bound by residues H17 and D19. K54 bears the N6-acetyllysine mark. G184 is a substrate binding site. H214 contributes to the Zn(2+) binding site. E217 serves as the catalytic Proton donor. An N6-acetyllysine modification is found at K232. Residue D295 coordinates Zn(2+). D296 lines the substrate pocket.

The protein belongs to the metallo-dependent hydrolases superfamily. Adenosine and AMP deaminases family. As to quaternary structure, interacts with DPP4 (via extracellular domain). Interacts with PLG (via Kringle 4 domain); the interaction stimulates PLG activation when in complex with DPP4. Zn(2+) is required as a cofactor. As to expression, detected in brain and liver (at protein level).

Its subcellular location is the cell membrane. The protein resides in the cell junction. It is found in the cytoplasmic vesicle lumen. It localises to the cytoplasm. The protein localises to the lysosome. The enzyme catalyses adenosine + H2O + H(+) = inosine + NH4(+). It carries out the reaction 2'-deoxyadenosine + H2O + H(+) = 2'-deoxyinosine + NH4(+). It catalyses the reaction cordycepin + H2O + H(+) = 3'-deoxyinosine + NH4(+). Its function is as follows. Catalyzes the hydrolytic deamination of adenosine and 2-deoxyadenosine. Plays an important role in purine metabolism and in adenosine homeostasis. Modulates signaling by extracellular adenosine, and so contributes indirectly to cellular signaling events. Acts as a positive regulator of T-cell coactivation, by binding DPP4. Its interaction with DPP4 regulates lymphocyte-epithelial cell adhesion. Enhances dendritic cell immunogenicity by affecting dendritic cell costimulatory molecule expression and cytokines and chemokines secretion. Enhances CD4+ T-cell differentiation and proliferation. Acts as a positive modulator of adenosine receptors ADORA1 and ADORA2A, by enhancing their ligand affinity via conformational change. Stimulates plasminogen activation. Plays a role in male fertility. Plays a protective role in early postimplantation embryonic development. Also responsible for the deamination of cordycepin (3'-deoxyadenosine), a fungal natural product that shows antitumor, antibacterial, antifungal, antivirus, and immune regulation properties. The sequence is that of Adenosine deaminase (Ada) from Rattus norvegicus (Rat).